Reading from the N-terminus, the 274-residue chain is Halorhodopsin (274 aa).

Positions 1 to 21 (MSITSVPGVVDAGVLGAQSAA) are excised as a propeptide. Topologically, residues 22–25 (AVRE) are extracellular. A helical transmembrane segment spans residues 26-51 (NALLSSSLWVNVALAGIAILVFVYMG). The Cytoplasmic segment spans residues 52 to 57 (RTIRPG). Residues 58-81 (RPRLIWGATLMIPLVSISSYLGLL) form a helical membrane-spanning segment. Residues 82–105 (SGLTVGMIEMPAGHALAGEMVRSQ) lie on the Extracellular side of the membrane. 3 residues coordinate chloride: Gln-105, Thr-111, and Ser-115. A helical membrane pass occupies residues 106-127 (WGRYLTWALSTPMILLALGLLA). Topologically, residues 128–130 (DVD) are cytoplasmic. Residues 131-154 (LGSLFTVIAADIGMCVTGLAAAMT) traverse the membrane as a helical segment. Residues 155–157 (TSA) are Extracellular-facing. Residues 158–180 (LLFRWAFYAISCAFFVVVLSALV) form a helical membrane-spanning segment. Topologically, residues 181–192 (TDWAASASSAGT) are cytoplasmic. A helical membrane pass occupies residues 193–216 (AEIFDTLRVLTVVLWLGYPIVWAV). Residues 217–226 (GVEGLALVQS) lie on the Extracellular side of the membrane. Residues 227 to 255 (VGVTSWAYSVLDVFAKYVFAFILLRWVAN) form a helical membrane-spanning segment. The residue at position 242 (Lys-242) is an N6-(retinylidene)lysine. Residues 256 to 274 (NERTVAVAGQTLGTMSSDD) are Cytoplasmic-facing.

It belongs to the archaeal/bacterial/fungal opsin family. In terms of assembly, homotrimer.

Its subcellular location is the cell membrane. Light-driven chloride pump. In Halobacterium salinarum (strain ATCC 29341 / DSM 671 / R1), this protein is Halorhodopsin (hop).